The chain runs to 90 residues: YcgL domain-containing protein Spro_2755 (90 aa).

The region spanning 1–85 is the YcgL domain; the sequence is MLCVIYRSSK…PLENLLKQHL (85 aa).

The chain is YcgL domain-containing protein Spro_2755 from Serratia proteamaculans (strain 568).